The chain runs to 358 residues: Methionine aminopeptidase 2 (358 aa).

A substrate-binding site is contributed by His-109. The a divalent metal cation site is built by Asp-130, Asp-141, and His-210. His-218 lines the substrate pocket. Residues Glu-243 and Glu-339 each contribute to the a divalent metal cation site.

This sequence belongs to the peptidase M24A family. Methionine aminopeptidase eukaryotic type 2 subfamily. It depends on Co(2+) as a cofactor. Zn(2+) serves as cofactor. Mn(2+) is required as a cofactor. The cofactor is Fe(2+).

The protein localises to the cytoplasm. The enzyme catalyses Release of N-terminal amino acids, preferentially methionine, from peptides and arylamides.. Functionally, cotranslationally removes the N-terminal methionine from nascent proteins. The N-terminal methionine is often cleaved when the second residue in the primary sequence is small and uncharged (Met-Ala-, Cys, Gly, Pro, Ser, Thr, or Val). In Encephalitozoon cuniculi (strain GB-M1) (Microsporidian parasite), this protein is Methionine aminopeptidase 2.